Here is a 69-residue protein sequence, read N- to C-terminus: MSRILILLIRFYQLAISPWLAPRCRFQPTCSGYAIEAVSKHGALKGGCLAARRICRCHPWGGSGYDPVP.

Belongs to the UPF0161 family.

It localises to the cell inner membrane. Functionally, could be involved in insertion of integral membrane proteins into the membrane. The sequence is that of Putative membrane protein insertion efficiency factor from Chromobacterium violaceum (strain ATCC 12472 / DSM 30191 / JCM 1249 / CCUG 213 / NBRC 12614 / NCIMB 9131 / NCTC 9757 / MK).